Consider the following 322-residue polypeptide: Pyridoxal kinase (322 aa).

An N-acetylmethionine modification is found at Met-1. The pyridoxal site is built by Ser-22 and Thr-57. Position 57 (Thr-57) interacts with pyridoxal 5'-phosphate. Ser-69 is modified (phosphoserine). Asp-123 is an ATP binding site. Asp-123 serves as a coordination point for Na(+). Residue Asp-128 participates in Mg(2+) binding. Thr-158 is a binding site for Na(+). Asn-160–Glu-163 is a binding site for ATP. Residue Ser-174 is modified to Phosphoserine. Thr-196 serves as a coordination point for Na(+). Thr-196–Ser-197 provides a ligand contact to ATP. A Phosphoserine modification is found at Ser-223. ATP-binding positions include Val-236–Ala-238 and Thr-243. Pyridoxal 5'-phosphate is bound at residue Gly-244 to Asp-245. The active-site Proton acceptor is the Asp-245. Position 295 is a phosphoserine (Ser-295).

Belongs to the pyridoxine kinase family. Homodimer. It depends on Zn(2+) as a cofactor. The cofactor is Mg(2+). In terms of processing, the N-terminus is blocked.

It is found in the cytoplasm. It localises to the cytosol. It catalyses the reaction pyridoxal + ATP = pyridoxal 5'-phosphate + ADP + H(+). It carries out the reaction pyridoxamine + ATP = pyridoxamine 5'-phosphate + ADP + H(+). The enzyme catalyses pyridoxine + ATP = pyridoxine 5'-phosphate + ADP + H(+). The protein operates within cofactor metabolism; pyridoxal 5'-phosphate salvage; pyridoxal 5'-phosphate from pyridoxal: step 1/1. Its pathway is cofactor metabolism; pyridoxal 5'-phosphate salvage; pyridoxine 5'-phosphate from pyridoxine: step 1/1. It functions in the pathway cofactor metabolism; pyridoxal 5'-phosphate salvage; pyridoxamine 5'-phosphate from pyridoxamine: step 1/1. With respect to regulation, activity is increased in the presence of K(+)or Na(+). In terms of biological role, catalyzes the phosphorylation of the dietary vitamin B6 vitamers pyridoxal (PL), pyridoxine (PN) and pyridoxamine (PM) to form pyridoxal 5'-phosphate (PLP), pyridoxine 5'-phosphate (PNP) and pyridoxamine 5'-phosphate (PMP), respectively. PLP is the active form of vitamin B6, and acts as a cofactor for over 140 different enzymatic reactions. This is Pyridoxal kinase (PDXK) from Sus scrofa (Pig).